The chain runs to 202 residues: Small ribosomal subunit protein uS4 (202 aa).

The segment at 22-48 is disordered; sequence TGKELARRPYAPGDHGQGRRGKLSEYG. Positions 93 to 154 constitute an S4 RNA-binding domain; sequence RRLDNMVYRL…KSKKLAVITG (62 aa).

This sequence belongs to the universal ribosomal protein uS4 family. Part of the 30S ribosomal subunit. Contacts protein S5. The interaction surface between S4 and S5 is involved in control of translational fidelity.

One of the primary rRNA binding proteins, it binds directly to 16S rRNA where it nucleates assembly of the body of the 30S subunit. Its function is as follows. With S5 and S12 plays an important role in translational accuracy. The chain is Small ribosomal subunit protein uS4 from Lactiplantibacillus plantarum (strain ATCC BAA-793 / NCIMB 8826 / WCFS1) (Lactobacillus plantarum).